A 610-amino-acid polypeptide reads, in one-letter code: Sterol O-acyltransferase 1 (610 aa).

2 positions are modified to phosphoserine: serine 21 and serine 45. The disordered stretch occupies residues 41-81 (SMEVSPRSSTTSLVEPVESTEGVESTEAERVAGKQEQEEEY). A compositionally biased stretch (basic and acidic residues) spans 67–76 (EAERVAGKQE). The next 5 membrane-spanning stretches (helical) occupy residues 182 to 202 (LESN…WIAI), 229 to 249 (LFTI…VVFV), 264 to 284 (GFVA…PIYV), 371 to 391 (ISCS…QINY), and 409 to 429 (IIGT…PVAM). Positions 491 to 497 (FYGDWWN) match the FYXDWWN motif motif. A run of 2 helical transmembrane segments spans residues 535–555 (ATLF…FAIF) and 590–610 (VVFS…YLTL). The active site involves histidine 547.

This sequence belongs to the membrane-bound acyltransferase family. Sterol o-acyltransferase subfamily.

The protein resides in the endoplasmic reticulum membrane. The catalysed reaction is lanosterol + an acyl-CoA = lanosteryl ester + CoA. Its function is as follows. Sterol O-acyltransferase that catalyzes the formation of stery esters. This is Sterol O-acyltransferase 1 from Saccharomyces cerevisiae (strain ATCC 204508 / S288c) (Baker's yeast).